Reading from the N-terminus, the 353-residue chain is Photosystem II protein D1 (353 aa).

An N-acetylthreonine modification is found at Thr-2. At Thr-2 the chain carries Phosphothreonine. Helical transmembrane passes span 29-46, 118-133, and 142-156; these read YIGWFGVLMIPTLLTATS, HFLLGVRCYMGREWEL, and WIAVAYSAPVAAATA. Residue His-118 coordinates chlorophyll a. Tyr-126 is a binding site for pheophytin a. [CaMn4O5] cluster is bound by residues Asp-170 and Glu-189. Residues 197–218 form a helical membrane-spanning segment; the sequence is FHMLGVAGVFGGSLFSAMHGSL. Chlorophyll a is bound at residue His-198. A quinone-binding positions include His-215 and 264-265; that span reads SF. His-215 is a binding site for Fe cation. His-272 lines the Fe cation pocket. Residues 274 to 288 traverse the membrane as a helical segment; the sequence is FLAAWPVIGIWFTSL. 4 residues coordinate [CaMn4O5] cluster: His-332, Glu-333, Asp-342, and Ala-344. Residues 345–353 constitute a propeptide that is removed on maturation; that stretch reads AVEAPSTIG.

This sequence belongs to the reaction center PufL/M/PsbA/D family. PSII is composed of 1 copy each of membrane proteins PsbA, PsbB, PsbC, PsbD, PsbE, PsbF, PsbH, PsbI, PsbJ, PsbK, PsbL, PsbM, PsbT, PsbX, PsbY, PsbZ, Psb30/Ycf12, at least 3 peripheral proteins of the oxygen-evolving complex and a large number of cofactors. It forms dimeric complexes. The D1/D2 heterodimer binds P680, chlorophylls that are the primary electron donor of PSII, and subsequent electron acceptors. It shares a non-heme iron and each subunit binds pheophytin, quinone, additional chlorophylls, carotenoids and lipids. D1 provides most of the ligands for the Mn4-Ca-O5 cluster of the oxygen-evolving complex (OEC). There is also a Cl(-1) ion associated with D1 and D2, which is required for oxygen evolution. The PSII complex binds additional chlorophylls, carotenoids and specific lipids. is required as a cofactor. In terms of processing, tyr-161 forms a radical intermediate that is referred to as redox-active TyrZ, YZ or Y-Z. C-terminally processed by CTPA; processing is essential to allow assembly of the oxygen-evolving complex and thus photosynthetic growth.

The protein resides in the plastid. The protein localises to the chloroplast thylakoid membrane. The enzyme catalyses 2 a plastoquinone + 4 hnu + 2 H2O = 2 a plastoquinol + O2. Its function is as follows. Photosystem II (PSII) is a light-driven water:plastoquinone oxidoreductase that uses light energy to abstract electrons from H(2)O, generating O(2) and a proton gradient subsequently used for ATP formation. It consists of a core antenna complex that captures photons, and an electron transfer chain that converts photonic excitation into a charge separation. The D1/D2 (PsbA/PsbD) reaction center heterodimer binds P680, the primary electron donor of PSII as well as several subsequent electron acceptors. The protein is Photosystem II protein D1 of Landoltia punctata (Dotted duckmeat).